A 532-amino-acid chain; its full sequence is Exodeoxyribonuclease 7 large subunit (532 aa).

Residues 497 to 532 form a disordered region; sequence AITTGEGTPAPETAAAPKKKPAKPASSDPGNQGNLF. Residues 499–512 are compositionally biased toward low complexity; it reads TTGEGTPAPETAAA.

Belongs to the XseA family. Heterooligomer composed of large and small subunits.

The protein resides in the cytoplasm. The catalysed reaction is Exonucleolytic cleavage in either 5'- to 3'- or 3'- to 5'-direction to yield nucleoside 5'-phosphates.. In terms of biological role, bidirectionally degrades single-stranded DNA into large acid-insoluble oligonucleotides, which are then degraded further into small acid-soluble oligonucleotides. This chain is Exodeoxyribonuclease 7 large subunit, found in Agrobacterium fabrum (strain C58 / ATCC 33970) (Agrobacterium tumefaciens (strain C58)).